The sequence spans 488 residues: Pre-glycoprotein polyprotein GP complex (488 aa).

Glycine 2 carries the N-myristoyl glycine; by host lipid modification. The Extracellular segment spans residues 2-17; it reads GQLFSFFEEVPNIIHE. Residues 18-32 traverse the membrane as a helical segment; the sequence is AINIALIAVSLIAAL. A topological domain (cytoplasmic) is located at residue lysine 33. A helical transmembrane segment spans residues 34–53; it reads GMINLWKSGLFQLIFFLTLA. Extracellular loops occupy residues 54 to 58 and 59 to 427; these read GRSCS and FRIG…TLVD. Cysteine 57 provides a ligand contact to Zn(2+). N-linked (GlcNAc...) asparagine; by host glycosylation is found at asparagine 69, asparagine 88, asparagine 99, asparagine 125, asparagine 171, asparagine 178, and asparagine 222. Disulfide bonds link cysteine 85–cysteine 229, cysteine 274–cysteine 287, cysteine 296–cysteine 305, and cysteine 359–cysteine 380. 4 N-linked (GlcNAc...) asparagine; by host glycosylation sites follow: asparagine 360, asparagine 368, asparagine 385, and asparagine 390. The helical transmembrane segment at 428-448 threads the bilayer; the sequence is ICFWSTLFFTTTLFLHLVGFP. The Cytoplasmic segment spans residues 449-488; sequence THRHIRGEPCPLPHRLNSRGGCRCGKYPELKKPITWHKNH. Residues histidine 450, histidine 452, cysteine 458, histidine 462, cysteine 470, cysteine 472, and histidine 488 each contribute to the Zn(2+) site.

This sequence belongs to the arenaviridae GPC protein family. In terms of assembly, homotetramer; disulfide-linked. Homotetramer. GP2 homotetramers bind through ionic interactions with GP1 homotetramers to form the GP complex together with the stable signal peptide. The GP-C polyprotein interacts with the host protease MBTPS1/SKI-1 resulting in the polyprotein processing. In terms of processing, specific enzymatic cleavages in vivo yield mature proteins. GP-C polyprotein is cleaved in the endoplasmic reticulum by the host protease MBTPS1. Only cleaved glycoprotein is incorporated into virions. Post-translationally, the SSP remains stably associated with the GP complex following cleavage by signal peptidase and plays crucial roles in the trafficking of GP through the secretory pathway. Myristoylation is necessary for GP2-mediated fusion activity.

The protein localises to the virion membrane. Its subcellular location is the host endoplasmic reticulum membrane. The protein resides in the host Golgi apparatus membrane. It localises to the host cell membrane. Functionally, interacts with the host receptor. Mediates virus attachment to host TFRC. This attachment induces virion internalization predominantly through clathrin-mediated endocytosis. Class I viral fusion protein that directs fusion of viral and host endosomal membranes, leading to delivery of the nucleocapsid into the cytoplasm. Membrane fusion is mediated by irreversible conformational changes induced upon acidification in the endosome. Its function is as follows. Stable signal peptide (SSP): cleaved and functions as a signal peptide. In addition, it is also retained as the third component of the GP complex. The SSP is required for efficient glycoprotein expression, post-translational maturation cleavage of GP1 and GP2, glycoprotein transport to the cell surface plasma membrane, formation of infectious virus particles, and acid pH-dependent glycoprotein-mediated cell fusion. The chain is Pre-glycoprotein polyprotein GP complex from Homo sapiens (Human).